The chain runs to 486 residues: Mitogen-activated protein kinase 17 (486 aa).

The 292-residue stretch at 16 to 307 (YQIQEVVGKG…AEEALADPYF (292 aa)) folds into the Protein kinase domain. ATP-binding positions include 22–30 (VGKGSYGVV) and Lys45. Residue Asp142 is the Proton acceptor of the active site. The residue at position 178 (Thr178) is a Phosphothreonine. A TXY motif is present at residues 178–180 (TDY). Phosphotyrosine is present on Tyr180. Residue Thr183 is modified to Phosphothreonine. A disordered region spans residues 386–455 (EEHNDDEEEH…LSSQKASQVD (70 aa)). Residues 422–433 (SVHAQSSSASVV) show a composition bias toward low complexity. Residues 440–452 (PNTATGLSSQKAS) are compositionally biased toward polar residues.

Belongs to the protein kinase superfamily. CMGC Ser/Thr protein kinase family. MAP kinase subfamily. Dually phosphorylated on Thr-178 and Tyr-180, which activates the enzyme.

It catalyses the reaction L-seryl-[protein] + ATP = O-phospho-L-seryl-[protein] + ADP + H(+). The enzyme catalyses L-threonyl-[protein] + ATP = O-phospho-L-threonyl-[protein] + ADP + H(+). Activated by threonine and tyrosine phosphorylation. The protein is Mitogen-activated protein kinase 17 (MPK17) of Arabidopsis thaliana (Mouse-ear cress).